Consider the following 330-residue polypeptide: Aspartate--ammonia ligase (330 aa).

Belongs to the class-II aminoacyl-tRNA synthetase family. AsnA subfamily.

The protein resides in the cytoplasm. The enzyme catalyses L-aspartate + NH4(+) + ATP = L-asparagine + AMP + diphosphate + H(+). The protein operates within amino-acid biosynthesis; L-asparagine biosynthesis; L-asparagine from L-aspartate (ammonia route): step 1/1. The sequence is that of Aspartate--ammonia ligase from Edwardsiella ictaluri (strain 93-146).